A 611-amino-acid polypeptide reads, in one-letter code: Threonine--tRNA ligase (611 aa).

The editing domain stretch occupies residues 1-145; the sequence is MRLLLIHSDH…TILPGEGAAA (145 aa). A catalytic region spans residues 195–487; that stretch reads VHVDLMRAKE…TAAQEVPSFP (293 aa). Cys287, His339, and His460 together coordinate Zn(2+).

This sequence belongs to the class-II aminoacyl-tRNA synthetase family. Homodimer. Zn(2+) is required as a cofactor.

The protein resides in the cytoplasm. It carries out the reaction tRNA(Thr) + L-threonine + ATP = L-threonyl-tRNA(Thr) + AMP + diphosphate + H(+). In terms of biological role, catalyzes the attachment of threonine to tRNA(Thr) in a two-step reaction: L-threonine is first activated by ATP to form Thr-AMP and then transferred to the acceptor end of tRNA(Thr). Also edits incorrectly charged L-seryl-tRNA(Thr). The sequence is that of Threonine--tRNA ligase from Methanoculleus marisnigri (strain ATCC 35101 / DSM 1498 / JR1).